Consider the following 544-residue polypeptide: Chaperonin GroEL (544 aa).

ATP is bound by residues 29 to 32, 86 to 90, Gly-413, 476 to 478, and Asp-492; these read TLGP, DGTTT, and NAA.

Belongs to the chaperonin (HSP60) family. Forms a cylinder of 14 subunits composed of two heptameric rings stacked back-to-back. Interacts with the co-chaperonin GroES.

It localises to the cytoplasm. It catalyses the reaction ATP + H2O + a folded polypeptide = ADP + phosphate + an unfolded polypeptide.. Its function is as follows. Together with its co-chaperonin GroES, plays an essential role in assisting protein folding. The GroEL-GroES system forms a nano-cage that allows encapsulation of the non-native substrate proteins and provides a physical environment optimized to promote and accelerate protein folding. This is Chaperonin GroEL from Bacillus anthracis (strain A0248).